The sequence spans 365 residues: tRNA-specific 2-thiouridylase MnmA (365 aa).

Residues 14-21 (AMSGGVDS) and L40 each bind ATP. C108 serves as the catalytic Nucleophile. C108 and C204 are oxidised to a cystine. G132 serves as a coordination point for ATP. The segment at 154 to 156 (KDQ) is interaction with tRNA. The active-site Cysteine persulfide intermediate is C204.

The protein belongs to the MnmA/TRMU family.

The protein resides in the cytoplasm. The enzyme catalyses S-sulfanyl-L-cysteinyl-[protein] + uridine(34) in tRNA + AH2 + ATP = 2-thiouridine(34) in tRNA + L-cysteinyl-[protein] + A + AMP + diphosphate + H(+). Catalyzes the 2-thiolation of uridine at the wobble position (U34) of tRNA, leading to the formation of s(2)U34. The chain is tRNA-specific 2-thiouridylase MnmA from Rickettsia massiliae (strain Mtu5).